A 166-amino-acid chain; its full sequence is Large ribosomal subunit protein uL10 (166 aa).

This sequence belongs to the universal ribosomal protein uL10 family. Part of the ribosomal stalk of the 50S ribosomal subunit. The N-terminus interacts with L11 and the large rRNA to form the base of the stalk. The C-terminus forms an elongated spine to which L12 dimers bind in a sequential fashion forming a multimeric L10(L12)X complex.

Functionally, forms part of the ribosomal stalk, playing a central role in the interaction of the ribosome with GTP-bound translation factors. In Streptococcus uberis (strain ATCC BAA-854 / 0140J), this protein is Large ribosomal subunit protein uL10.